A 493-amino-acid chain; its full sequence is Cobyric acid synthase (493 aa).

The GATase cobBQ-type domain maps to 252–441 (DLKITVIRLP…LHGLLENGPW (190 aa)). Catalysis depends on Cys-333, which acts as the Nucleophile. His-433 is a catalytic residue.

The protein belongs to the CobB/CobQ family. CobQ subfamily.

It participates in cofactor biosynthesis; adenosylcobalamin biosynthesis. In terms of biological role, catalyzes amidations at positions B, D, E, and G on adenosylcobyrinic A,C-diamide. NH(2) groups are provided by glutamine, and one molecule of ATP is hydrogenolyzed for each amidation. The chain is Cobyric acid synthase from Thermosynechococcus vestitus (strain NIES-2133 / IAM M-273 / BP-1).